The following is a 313-amino-acid chain: Ribosomal RNA small subunit methyltransferase H (313 aa).

Residues 35–37 (GGH), Asp-55, Phe-80, Asp-102, and Gln-109 contribute to the S-adenosyl-L-methionine site.

This sequence belongs to the methyltransferase superfamily. RsmH family.

Its subcellular location is the cytoplasm. The enzyme catalyses cytidine(1402) in 16S rRNA + S-adenosyl-L-methionine = N(4)-methylcytidine(1402) in 16S rRNA + S-adenosyl-L-homocysteine + H(+). In terms of biological role, specifically methylates the N4 position of cytidine in position 1402 (C1402) of 16S rRNA. The chain is Ribosomal RNA small subunit methyltransferase H from Shewanella baltica (strain OS223).